The primary structure comprises 253 residues: tRNA pseudouridine synthase A (253 aa).

The Nucleophile role is filled by Asp-52. Tyr-110 is a binding site for substrate.

The protein belongs to the tRNA pseudouridine synthase TruA family. As to quaternary structure, homodimer.

The catalysed reaction is uridine(38/39/40) in tRNA = pseudouridine(38/39/40) in tRNA. Its function is as follows. Formation of pseudouridine at positions 38, 39 and 40 in the anticodon stem and loop of transfer RNAs. The sequence is that of tRNA pseudouridine synthase A from Thermus thermophilus (strain ATCC BAA-163 / DSM 7039 / HB27).